We begin with the raw amino-acid sequence, 34 residues long: Photosystem II reaction center protein T (34 aa).

A helical transmembrane segment spans residues Ala3–Phe23.

It belongs to the PsbT family. In terms of assembly, PSII is composed of 1 copy each of membrane proteins PsbA, PsbB, PsbC, PsbD, PsbE, PsbF, PsbH, PsbI, PsbJ, PsbK, PsbL, PsbM, PsbT, PsbY, PsbZ, Psb30/Ycf12, at least 3 peripheral proteins of the oxygen-evolving complex and a large number of cofactors. It forms dimeric complexes.

It localises to the plastid. The protein resides in the chloroplast thylakoid membrane. Its function is as follows. Found at the monomer-monomer interface of the photosystem II (PS II) dimer, plays a role in assembly and dimerization of PSII. PSII is a light-driven water plastoquinone oxidoreductase, using light energy to abstract electrons from H(2)O, generating a proton gradient subsequently used for ATP formation. This chain is Photosystem II reaction center protein T, found in Atropa belladonna (Belladonna).